Consider the following 794-residue polypeptide: Copper-exporting P-type ATPase (794 aa).

HMA domains follow at residues 5-70 (KKTT…YGVL) and 72-138 (ETAE…YDAQ). Cu(+) contacts are provided by cysteine 16, cysteine 19, cysteine 83, and cysteine 86. A run of 6 helical transmembrane segments spans residues 162-182 (IISAVLAAPLLLTMLVHLFGI), 187-207 (IFMNPWFQFILATPVQFIIGW), 224-244 (MDVLVALGTSAAYFYSLYEMV), 250-270 (ANVMPHLYFETSAVLITLILF), 411-431 (YFVPIVVGIAVLTFIIWIAFV), and 438-458 (PALVAAIAVLVIACPCALGLA). The active-site 4-aspartylphosphate intermediate is aspartate 495. Mg(2+) is bound by residues aspartate 689 and aspartate 693. The next 2 membrane-spanning stretches (helical) occupy residues 747–766 (LFWAFGYNVAGIPIAALGLL) and 770–789 (IAGAAMALSSVSVVTNALRL).

This sequence belongs to the cation transport ATPase (P-type) (TC 3.A.3) family. Type IB subfamily.

It is found in the cell membrane. The catalysed reaction is Cu(+)(in) + ATP + H2O = Cu(+)(out) + ADP + phosphate + H(+). Its function is as follows. Involved in copper export. The chain is Copper-exporting P-type ATPase (copA) from Staphylococcus saprophyticus subsp. saprophyticus (strain ATCC 15305 / DSM 20229 / NCIMB 8711 / NCTC 7292 / S-41).